The sequence spans 415 residues: MHSLIKDLKARNLINNITNEEKLIKALEKNKGIYVGFDPSADSLHLGNYIMIMLLKRFRLYNIKTLALVGGATGMIGDPSGKSAERNLLDKTILEKNIAKIKFQLEKFTNSQVINNYVFYENMTFLDFLRDVGKLININYLLEKEIINSRLSVGISYTEFSYNLLQGYDFLQLYKNDNIAIQAGGSDQWGNITTGIEMIRKNLGDDNIACGLTINLLTNSEGKKFGKSEKGAIYLDENKSTVYEMYQFLINQSDADVEKLLNFLTLIDVEEIKKIMQAHKNNPALRVAQKALAKAVVVDIHGQQKYEQALHISEVLFNGSISTLNQEELEIAIKSLPATKLDKDEIKIIDLLNLANISSSNRIARDFLNTGSILINDIKINDENFLVKKQDAINQKFSIIRKGKRNYFLILWNKD.

Y34 lines the L-tyrosine pocket. The 'HIGH' region signature appears at 39-48 (PSADSLHLGN). 2 residues coordinate L-tyrosine: Y162 and Q166. The 'KMSKS' region signature appears at 224–228 (KFGKS). K227 lines the ATP pocket. The region spanning 346–413 (IKIIDLLNLA…KRNYFLILWN (68 aa)) is the S4 RNA-binding domain.

Belongs to the class-I aminoacyl-tRNA synthetase family. TyrS type 1 subfamily. As to quaternary structure, homodimer.

It localises to the cytoplasm. It catalyses the reaction tRNA(Tyr) + L-tyrosine + ATP = L-tyrosyl-tRNA(Tyr) + AMP + diphosphate + H(+). Functionally, catalyzes the attachment of tyrosine to tRNA(Tyr) in a two-step reaction: tyrosine is first activated by ATP to form Tyr-AMP and then transferred to the acceptor end of tRNA(Tyr). In Ureaplasma parvum serovar 3 (strain ATCC 27815 / 27 / NCTC 11736), this protein is Tyrosine--tRNA ligase.